Here is a 375-residue protein sequence, read N- to C-terminus: Killer cell immunoglobulin-like receptor 2DL5B (375 aa).

Positions 1–21 (MSLMVVSMACVGFFLLQGAWT) are cleaved as a signal peptide. Residues 22 to 238 (HEGGQDKPLL…PSSKTGIRRH (217 aa)) are Extracellular-facing. 2 Ig-like C2-type domains span residues 42-102 (GGHV…HPRS) and 137-200 (GENV…LHDS). 2 cysteine pairs are disulfide-bonded: Cys-49–Cys-95 and Cys-144–Cys-193. A disordered region spans residues 213–233 (VSVTGNSSSSSSSPTEPSSKT). A glycan (N-linked (GlcNAc...) asparagine) is linked at Asn-218. A compositionally biased stretch (low complexity) spans 219-231 (SSSSSSSPTEPSS). Residues 239–259 (LHILIGTSVAIILFIILFFFL) traverse the membrane as a helical segment. The Cytoplasmic portion of the chain corresponds to 260-375 (LHCCCSNKKN…ASSHVPAAGI (116 aa)). The disordered stretch occupies residues 334–375 (AKPRSLSPAHKHHSQALRGSSRETTALSQNRVASSHVPAAGI). Polar residues predominate over residues 355–366 (RETTALSQNRVA).

The protein belongs to the immunoglobulin superfamily.

The protein resides in the cell membrane. Its function is as follows. Receptor on natural killer (NK) cells for HLA-C alleles. Inhibits the activity of NK cells thus preventing cell lysis. The protein is Killer cell immunoglobulin-like receptor 2DL5B (KIR2DL5B) of Homo sapiens (Human).